The chain runs to 123 residues: MPTINQLIANPRVVQKSRKKVPALQQSPQKRGVCTRVYTTTPKKPNSALRKVAKVRLTNGFEVIGYIPGEGHNLQEHSVVMIRGGRVKDLPGVRYHILRGVLDTQGVKNRKQRRSKYGAKRPK.

At aspartate 89 the chain carries 3-methylthioaspartic acid.

The protein belongs to the universal ribosomal protein uS12 family. Part of the 30S ribosomal subunit. Contacts proteins S8 and S17. May interact with IF1 in the 30S initiation complex.

With S4 and S5 plays an important role in translational accuracy. Its function is as follows. Interacts with and stabilizes bases of the 16S rRNA that are involved in tRNA selection in the A site and with the mRNA backbone. Located at the interface of the 30S and 50S subunits, it traverses the body of the 30S subunit contacting proteins on the other side and probably holding the rRNA structure together. The combined cluster of proteins S8, S12 and S17 appears to hold together the shoulder and platform of the 30S subunit. This Rhodopseudomonas palustris (strain BisA53) protein is Small ribosomal subunit protein uS12.